We begin with the raw amino-acid sequence, 728 residues long: Methionine--tRNA ligase (728 aa).

The short motif at 13-23 (PYANGSIHLGH) is the 'HIGH' region element. Zn(2+) contacts are provided by cysteine 144, cysteine 147, cysteine 157, and cysteine 160. Positions 348 to 352 (KMSKS) match the 'KMSKS' region motif. ATP is bound at residue lysine 351. The tract at residues 585 to 620 (LAPAKSQQVAQAVETMEKNSSTTPAPAKEGEAGQAS) is disordered. The tRNA-binding domain maps to 628-728 (DFGKIDLRVA…EGARPGMKVK (101 aa)).

The protein belongs to the class-I aminoacyl-tRNA synthetase family. MetG type 1 subfamily. As to quaternary structure, homodimer. Requires Zn(2+) as cofactor.

Its subcellular location is the cytoplasm. It catalyses the reaction tRNA(Met) + L-methionine + ATP = L-methionyl-tRNA(Met) + AMP + diphosphate. Is required not only for elongation of protein synthesis but also for the initiation of all mRNA translation through initiator tRNA(fMet) aminoacylation. The sequence is that of Methionine--tRNA ligase from Nitrosospira multiformis (strain ATCC 25196 / NCIMB 11849 / C 71).